The chain runs to 141 residues: Nucleoside diphosphate kinase (141 aa).

Positions 11, 59, 87, 93, 104, and 114 each coordinate ATP. His117 (pros-phosphohistidine intermediate) is an active-site residue.

Belongs to the NDK family. As to quaternary structure, homotetramer. The cofactor is Mg(2+).

It is found in the cytoplasm. It catalyses the reaction a 2'-deoxyribonucleoside 5'-diphosphate + ATP = a 2'-deoxyribonucleoside 5'-triphosphate + ADP. It carries out the reaction a ribonucleoside 5'-diphosphate + ATP = a ribonucleoside 5'-triphosphate + ADP. In terms of biological role, major role in the synthesis of nucleoside triphosphates other than ATP. The ATP gamma phosphate is transferred to the NDP beta phosphate via a ping-pong mechanism, using a phosphorylated active-site intermediate. The polypeptide is Nucleoside diphosphate kinase (Laribacter hongkongensis (strain HLHK9)).